The following is a 522-amino-acid chain: Sorting nexin-1 (522 aa).

2 disordered regions span residues 1-89 (MASG…QDLF) and 115-142 (SLPP…QEDQ). Phosphoserine is present on residues serine 32 and serine 39. Residues 35 to 45 (EAGDSDTEGED) show a composition bias toward acidic residues. Threonine 41 and threonine 48 each carry phosphothreonine. 2 positions are modified to phosphoserine: serine 58 and serine 72. Residues 60–73 (KRTTSLLPINNGSK) are compositionally biased toward polar residues. Positions 132-142 (EELEEEEQEDQ) are enriched in acidic residues. A PX domain is found at 143–272 (FDLTVGITDP…EFLEKEELPR (130 aa)). Positions 186, 188, and 214 each coordinate a 1,2-diacyl-sn-glycero-3-phospho-(1D-myo-inositol-3-phosphate). Serine 188 bears the Phosphoserine mark. The residue at position 237 (lysine 237) is an N6-acetyllysine. Arginine 238 provides a ligand contact to a 1,2-diacyl-sn-glycero-3-phospho-(1D-myo-inositol-3-phosphate). A Phosphoserine modification is found at serine 280. Residues 281 to 298 (GAGLLKMFNKATDAVSKM) are membrane-binding amphipathic helix. In terms of domain architecture, BAR spans 302 to 522 (MNESDIWFEE…AFLPEAKAIS (221 aa)).

This sequence belongs to the sorting nexin family. As to quaternary structure, predominantly forms heterodimers with BAR domain-containing sorting nexins SNX5, SNX6 and SNX32; can self-associate to form homodimers. The heterodimers are proposed to self-assemble into helical arrays on the membrane to stabilize and expand local membrane curvature underlying endosomal tubule formation. Thought to be a component of the originally described retromer complex (also called SNX-BAR retromer) which is a pentamer containing the heterotrimeric retromer cargo-selective complex (CSC), also described as vacuolar protein sorting subcomplex (VPS) and a heterodimeric membrane-deforming subcomplex formed between SNX1 or SNX2 and SNX5 or SNX6 (also called SNX-BAR subcomplex); the respective CSC and SNX-BAR subcomplexes associate with low affinity. Interacts with SNX5, SNX6, SNX32, VPS26A, VPS29, VPS35, DRD5, DENND5A, KALRN, RHOG (GDP-bound form). The interaction with SNX2 is reported controversially. Interacts with DNAJC13; prevented by presence of HGS. Interacts with HGS.

Its subcellular location is the endosome membrane. The protein resides in the golgi apparatus. The protein localises to the trans-Golgi network membrane. It localises to the early endosome membrane. It is found in the cell projection. Its subcellular location is the lamellipodium. In terms of biological role, involved in several stages of intracellular trafficking. Interacts with membranes containing phosphatidylinositol 3-phosphate (PtdIns(3P)) or phosphatidylinositol 3,5-bisphosphate (PtdIns(3,5)P2). Acts in part as component of the retromer membrane-deforming SNX-BAR subcomplex. The SNX-BAR retromer mediates retrograde transport of cargo proteins from endosomes to the trans-Golgi network (TGN) and is involved in endosome-to-plasma membrane transport for cargo protein recycling. The SNX-BAR subcomplex functions to deform the donor membrane into a tubular profile called endosome-to-TGN transport carrier (ETC). Can sense membrane curvature and has in vitro vesicle-to-membrane remodeling activity. Involved in retrograde endosome-to-TGN transport of lysosomal enzyme receptors (IGF2R, M6PR and SORT1). Plays a role in targeting ligand-activated EGFR to the lysosomes for degradation after endocytosis from the cell surface and release from the Golgi. Involvement in retromer-independent endocytic trafficking of P2RY1 and lysosomal degradation of protease-activated receptor-1/F2R. Promotes KALRN- and RHOG-dependent but retromer-independent membrane remodeling such as lamellipodium formation; the function is dependent on GEF activity of KALRN. Required for endocytosis of DRD5 upon agonist stimulation but not for basal receptor trafficking. This is Sorting nexin-1 (SNX1) from Macaca fascicularis (Crab-eating macaque).